The following is a 1015-amino-acid chain: SKI family transcriptional corepressor 2 (1015 aa).

2 disordered regions span residues 280–316 (HLLGAPPPPPPPPPPLAELAGAPHAHHKRPRFDDDDD) and 518–934 (GAAG…KKDV). Residues 284–295 (APPPPPPPPPPL) show a composition bias toward pro residues. Over residues 575 to 600 (PPADSVAAAGAGAAAAGSGPAGSRVP) the composition is skewed to low complexity. Basic and acidic residues predominate over residues 628–637 (GGKDDAESLA). The span at 653-669 (HPHHHHHPHHHHHHHHP) shows a compositional bias: basic residues. Pro residues-rich tracts occupy residues 670–684 (PQPPSPLLLLPPQPD) and 694–708 (APPPPPPPPPPPPLA). Composition is skewed to acidic residues over residues 730–745 (DSSEDEDDEEEEQEVD) and 754–774 (GEEEEEGRDPDDDEEEDEETE). The segment covering 793–803 (PSEKGSSRDRA) has biased composition (basic and acidic residues). A compositionally biased stretch (pro residues) spans 832–842 (DLPPPPPPPLA). Composition is skewed to basic and acidic residues over residues 861–877 (PSLEEQPSYKDSQKTKE), 885–899 (TKDDNSFSDKNKEHS), and 912–922 (FWRERSGEHTQ).

The protein belongs to the SKI family. As to quaternary structure, interacts with SMAD2 and SMAD3. In terms of tissue distribution, expressed in cerebellum, spinal cord and testis. Isoform 2 is present in cerebellum (at protein level).

Its subcellular location is the nucleus. It localises to the cytoplasm. Exhibits transcriptional repressor activity. Acts as a TGF-beta antagonist in the nervous system. This chain is SKI family transcriptional corepressor 2, found in Homo sapiens (Human).